A 123-amino-acid polypeptide reads, in one-letter code: MFKRSEKVAEAVHELVSELLVKGLKDPRIGFVTITGVKVTDDMHLATIYFTVIGSDEEKKATEQGLNSARGFIRKEMGKSFRMRYVPDIVFKYDASVEYGSRIESILKEIGSPEHDDNDKENS.

It belongs to the RbfA family. In terms of assembly, monomer. Binds 30S ribosomal subunits, but not 50S ribosomal subunits or 70S ribosomes.

It is found in the cytoplasm. Functionally, one of several proteins that assist in the late maturation steps of the functional core of the 30S ribosomal subunit. Associates with free 30S ribosomal subunits (but not with 30S subunits that are part of 70S ribosomes or polysomes). Required for efficient processing of 16S rRNA. May interact with the 5'-terminal helix region of 16S rRNA. This is Ribosome-binding factor A from Geotalea daltonii (strain DSM 22248 / JCM 15807 / FRC-32) (Geobacter daltonii).